The chain runs to 306 residues: Glutaminase (306 aa).

Serine 64, asparagine 115, glutamate 159, asparagine 166, tyrosine 190, tyrosine 242, and valine 260 together coordinate substrate.

It belongs to the glutaminase family. In terms of assembly, homotetramer.

The enzyme catalyses L-glutamine + H2O = L-glutamate + NH4(+). The polypeptide is Glutaminase (Vibrio atlanticus (strain LGP32) (Vibrio splendidus (strain Mel32))).